A 333-amino-acid polypeptide reads, in one-letter code: Meiotic recombination protein rec24 (333 aa).

Belongs to the MEI4L family. As to quaternary structure, interacts with Rec7, as part of the meiotic recombination initiation complex.

The protein localises to the cytoplasm. It is found in the nucleus. In terms of biological role, required for correct meiotic chromosome segregation and recombination. Accessory protein required for Rec12 activity, which is involved in formation of the double-strand breaks (DSBs) that initiate meiotic recombination. This chain is Meiotic recombination protein rec24 (rec24), found in Schizosaccharomyces pombe (strain 972 / ATCC 24843) (Fission yeast).